Reading from the N-terminus, the 599-residue chain is Elongation factor 4 (599 aa).

One can recognise a tr-type G domain in the interval 4 to 186 (KFIRNFSIIA…AIIKHVPPPL (183 aa)). GTP-binding positions include 16–21 (DHGKST) and 133–136 (NKID).

It belongs to the TRAFAC class translation factor GTPase superfamily. Classic translation factor GTPase family. LepA subfamily.

It is found in the cell membrane. It carries out the reaction GTP + H2O = GDP + phosphate + H(+). Functionally, required for accurate and efficient protein synthesis under certain stress conditions. May act as a fidelity factor of the translation reaction, by catalyzing a one-codon backward translocation of tRNAs on improperly translocated ribosomes. Back-translocation proceeds from a post-translocation (POST) complex to a pre-translocation (PRE) complex, thus giving elongation factor G a second chance to translocate the tRNAs correctly. Binds to ribosomes in a GTP-dependent manner. The sequence is that of Elongation factor 4 from Ureaplasma parvum serovar 3 (strain ATCC 27815 / 27 / NCTC 11736).